A 57-amino-acid chain; its full sequence is Granulin-3 (57 aa).

2 disulfide bridges follow: Cys-4–Cys-16 and Cys-10–Cys-26.

Belongs to the granulin family. Post-translationally, granulins are disulfide bridged. As to expression, ubiquitous.

It localises to the secreted. Granulins have possible cytokine-like activity. They may play a role in inflammation, wound repair, and tissue remodeling. The chain is Granulin-3 from Cyprinus carpio (Common carp).